Here is a 406-residue protein sequence, read N- to C-terminus: uncharacterized protein (406 aa).

The next 5 membrane-spanning stretches (helical) occupy residues 7–27 (LCTNPLIILIGTYMSIKYYLF), 31–51 (YFNIQFGLYVTFIISLLYGSV), 65–85 (LIFILHVLFVLICFSIKSEII), 92–112 (IFYFGFVKTIIISVVIGSFIL), and 191–211 (ISLIKMYLYSVIVPYAISSFF). The tract at residues 259–331 (TLNVPISTNN…TGTNNNVVDN (73 aa)) is disordered. The segment covering 262-291 (VPISTNNTDNLNSVKTNQQFNTPVAKSNTK) has biased composition (polar residues). Positions 292-303 (SNRRKKTGKKIR) are enriched in basic residues. The segment covering 306-318 (NQTTSSNSSNNQS) has biased composition (low complexity). Positions 319 to 330 (PESTGTNNNVVD) are enriched in polar residues.

The protein resides in the membrane. This is an uncharacterized protein from Acanthamoeba polyphaga (Amoeba).